A 222-amino-acid chain; its full sequence is MATPQSVFVFAICILMITELILASKNYYDILGVPKSASERQIKKAFHKLAMKYHPDKNKSPDAEAKFREIAEAYETLSDANRRKEYDIIGHSAFTNGKGQRSNGSPFEQSFNFNFDDLFKDFNLFGQNQNTRSKKHFENHFQTRQDGSSRQRHHFQEFSFGGGLFDDMFEDMEKMFSFSGFDSTNRRTVQTENRFHGSSKHCRTVTQRRGNMVTTYTDCSGQ.

Residues 1-23 (MATPQSVFVFAICILMITELILA) form the signal peptide. The 65-residue stretch at 26–90 (NYYDILGVPK…NRRKEYDIIG (65 aa)) folds into the J domain. Residues 91 to 222 (HSAFTNGKGQ…VTTYTDCSGQ (132 aa)) form a divergent targeting domain region. Serine 133 carries the post-translational modification Phosphoserine.

In terms of assembly, interacts with HSPA5/BiP; interaction is direct. Interacts with ERN1/IRE1 (via the luminal region). Interacts with DERL1.

Its subcellular location is the endoplasmic reticulum lumen. Its function is as follows. Co-chaperone for Hsp70 protein HSPA5/BiP that acts as a key repressor of the ERN1/IRE1-mediated unfolded protein response (UPR). J domain-containing co-chaperones stimulate the ATPase activity of Hsp70 proteins and are required for efficient substrate recognition by Hsp70 proteins. In the unstressed endoplasmic reticulum, interacts with the luminal region of ERN1/IRE1 and selectively recruits HSPA5/BiP: HSPA5/BiP disrupts the dimerization of the active ERN1/IRE1 luminal region, thereby inactivating ERN1/IRE1. Also involved in endoplasmic reticulum-associated degradation (ERAD) of misfolded proteins. Required for survival of B-cell progenitors and normal antibody production. The chain is DnaJ homolog subfamily B member 9 from Rattus norvegicus (Rat).